The chain runs to 959 residues: UPF0182 protein MAE_41360 (959 aa).

A run of 9 helical transmembrane segments spans residues 13-33, 50-70, 99-119, 156-176, 184-204, 239-259, 276-296, 319-339, and 362-382; these read PILLFLGCLVIGQLGVLVVAN, LSWQLGLGWGSAILSLLFIFT, LLGLLIIATGIGAWIGSMLLY, DISSNLWQGLIIAFLVLGLLI, IISIVFTVMLSFIIAGQWANF, LWLTGVGIYTLFAVILTYLFS, LRHLYALWSGLMGLLVLHHII, VGQFIEIILGIIAGITSIWLG, and FFPYLVPVFLYLIVWISGTII.

The protein belongs to the UPF0182 family.

The protein localises to the cell membrane. This chain is UPF0182 protein MAE_41360, found in Microcystis aeruginosa (strain NIES-843 / IAM M-2473).